The primary structure comprises 473 residues: Bifunctional protein GlmU (473 aa).

The tract at residues 1–241 (MATQPTPLTA…VGSLVGINDR (241 aa)) is pyrophosphorylase. UDP-N-acetyl-alpha-D-glucosamine-binding positions include 13–16 (LAAG), Lys-27, Gln-84, and 89–90 (GT). Asp-114 contributes to the Mg(2+) binding site. UDP-N-acetyl-alpha-D-glucosamine-binding residues include Gly-152, Glu-167, Asn-182, and Asn-239. Asn-239 provides a ligand contact to Mg(2+). The interval 242–262 (AQLAAAEEVLYGRIADRLRKS) is linker. The N-acetyltransferase stretch occupies residues 263–473 (GVTIRTSARI…KARLKDAAKK (211 aa)). The UDP-N-acetyl-alpha-D-glucosamine site is built by Arg-343 and Lys-361. His-373 functions as the Proton acceptor in the catalytic mechanism. Residues Tyr-376 and Asn-387 each coordinate UDP-N-acetyl-alpha-D-glucosamine. Acetyl-CoA is bound by residues Ala-390, 396-397 (NY), Ser-415, Thr-433, and Arg-450.

This sequence in the N-terminal section; belongs to the N-acetylglucosamine-1-phosphate uridyltransferase family. In the C-terminal section; belongs to the transferase hexapeptide repeat family. Homotrimer. It depends on Mg(2+) as a cofactor.

It is found in the cytoplasm. The enzyme catalyses alpha-D-glucosamine 1-phosphate + acetyl-CoA = N-acetyl-alpha-D-glucosamine 1-phosphate + CoA + H(+). It catalyses the reaction N-acetyl-alpha-D-glucosamine 1-phosphate + UTP + H(+) = UDP-N-acetyl-alpha-D-glucosamine + diphosphate. It participates in nucleotide-sugar biosynthesis; UDP-N-acetyl-alpha-D-glucosamine biosynthesis; N-acetyl-alpha-D-glucosamine 1-phosphate from alpha-D-glucosamine 6-phosphate (route II): step 2/2. The protein operates within nucleotide-sugar biosynthesis; UDP-N-acetyl-alpha-D-glucosamine biosynthesis; UDP-N-acetyl-alpha-D-glucosamine from N-acetyl-alpha-D-glucosamine 1-phosphate: step 1/1. Its pathway is bacterial outer membrane biogenesis; LPS lipid A biosynthesis. In terms of biological role, catalyzes the last two sequential reactions in the de novo biosynthetic pathway for UDP-N-acetylglucosamine (UDP-GlcNAc). The C-terminal domain catalyzes the transfer of acetyl group from acetyl coenzyme A to glucosamine-1-phosphate (GlcN-1-P) to produce N-acetylglucosamine-1-phosphate (GlcNAc-1-P), which is converted into UDP-GlcNAc by the transfer of uridine 5-monophosphate (from uridine 5-triphosphate), a reaction catalyzed by the N-terminal domain. This Sorangium cellulosum (strain So ce56) (Polyangium cellulosum (strain So ce56)) protein is Bifunctional protein GlmU.